The sequence spans 149 residues: Macrodomain Ter protein (149 aa).

This sequence belongs to the MatP family. Homodimer.

Its subcellular location is the cytoplasm. Its function is as follows. Required for spatial organization of the terminus region of the chromosome (Ter macrodomain) during the cell cycle. Prevents early segregation of duplicated Ter macrodomains during cell division. Binds specifically to matS, which is a 13 bp signature motif repeated within the Ter macrodomain. The polypeptide is Macrodomain Ter protein (Vibrio cholerae serotype O1 (strain ATCC 39315 / El Tor Inaba N16961)).